We begin with the raw amino-acid sequence, 218 residues long: Methylthioribulose-1-phosphate dehydratase (218 aa).

Residues His107 and His109 each coordinate Zn(2+).

Belongs to the aldolase class II family. MtnB subfamily. The cofactor is Zn(2+).

It catalyses the reaction 5-(methylsulfanyl)-D-ribulose 1-phosphate = 5-methylsulfanyl-2,3-dioxopentyl phosphate + H2O. Its pathway is amino-acid biosynthesis; L-methionine biosynthesis via salvage pathway; L-methionine from S-methyl-5-thio-alpha-D-ribose 1-phosphate: step 2/6. Functionally, catalyzes the dehydration of methylthioribulose-1-phosphate (MTRu-1-P) into 2,3-diketo-5-methylthiopentyl-1-phosphate (DK-MTP-1-P). In Xylella fastidiosa (strain M12), this protein is Methylthioribulose-1-phosphate dehydratase.